The following is a 511-amino-acid chain: Histidine ammonia-lyase (511 aa).

The 5-imidazolinone (Ala-Gly) cross-link spans Ala142–Gly144. Ser143 carries the post-translational modification 2,3-didehydroalanine (Ser).

The protein belongs to the PAL/histidase family. Post-translationally, contains an active site 4-methylidene-imidazol-5-one (MIO), which is formed autocatalytically by cyclization and dehydration of residues Ala-Ser-Gly.

The protein resides in the cytoplasm. It carries out the reaction L-histidine = trans-urocanate + NH4(+). It functions in the pathway amino-acid degradation; L-histidine degradation into L-glutamate; N-formimidoyl-L-glutamate from L-histidine: step 1/3. The sequence is that of Histidine ammonia-lyase (hutH) from Rhizobium meliloti (strain 1021) (Ensifer meliloti).